The following is a 339-amino-acid chain: Anthranilate phosphoribosyltransferase (339 aa).

5-phospho-alpha-D-ribose 1-diphosphate is bound by residues Gly-79, 82–83 (GD), Ser-87, 89–92 (NIST), 107–115 (KHGNRSISS), and Ser-119. Gly-79 lines the anthranilate pocket. Position 91 (Ser-91) interacts with Mg(2+). Asn-110 contributes to the anthranilate binding site. Residue Arg-165 participates in anthranilate binding. Positions 224 and 225 each coordinate Mg(2+).

Belongs to the anthranilate phosphoribosyltransferase family. In terms of assembly, homodimer. The cofactor is Mg(2+).

The catalysed reaction is N-(5-phospho-beta-D-ribosyl)anthranilate + diphosphate = 5-phospho-alpha-D-ribose 1-diphosphate + anthranilate. It participates in amino-acid biosynthesis; L-tryptophan biosynthesis; L-tryptophan from chorismate: step 2/5. Functionally, catalyzes the transfer of the phosphoribosyl group of 5-phosphorylribose-1-pyrophosphate (PRPP) to anthranilate to yield N-(5'-phosphoribosyl)-anthranilate (PRA). This chain is Anthranilate phosphoribosyltransferase, found in Listeria monocytogenes serotype 4a (strain HCC23).